A 397-amino-acid polypeptide reads, in one-letter code: uncharacterized protein (397 aa).

[4Fe-4S] cluster contacts are provided by Cys8, Cys14, Cys17, and Cys95. Positions 229, 258, 279, and 325 each coordinate S-adenosyl-L-methionine. Cys352 serves as the catalytic Nucleophile.

It belongs to the class I-like SAM-binding methyltransferase superfamily. RNA M5U methyltransferase family.

This is an uncharacterized protein from Chlamydia muridarum (strain MoPn / Nigg).